Reading from the N-terminus, the 416-residue chain is Xyloglucan O-acetyltransferase 1 (416 aa).

At 1-14 (MGLNEQQNVPSQRK) the chain is on the cytoplasmic side. Residues 15–35 (IIVFIVLAFIPIALFRLCFNN) traverse the membrane as a helical; Signal-anchor for type II membrane protein segment. Over 36–416 (PFSSIKDTSL…MIEMLRRWKV (381 aa)) the chain is Lumenal. 4 disulfide bridges follow: cysteine 79–cysteine 129, cysteine 100–cysteine 165, cysteine 109–cysteine 395, and cysteine 318–cysteine 391. Asparagine 96 carries an N-linked (GlcNAc...) asparagine glycan. The GDS motif signature appears at 152–154 (GDS). Serine 154 (nucleophile) is an active-site residue. 3 N-linked (GlcNAc...) asparagine glycosylation sites follow: asparagine 194, asparagine 269, and asparagine 319. Aspartate 390 acts as the Proton donor in catalysis. The short motif at 390-393 (DCLH) is the DXXH motif element. Residue histidine 393 is the Proton acceptor of the active site.

This sequence belongs to the PC-esterase family. TBL subfamily.

Its subcellular location is the golgi apparatus membrane. Xyloglucan acetyltransferase that catalyzes the acetylation of fucosylated Gal residues on xyloglucan side chains. Predominantly catalyze 6-O-monoacetylation of Gal residues in the Fuc-Gal-Xyl trisaccharide side chains of xyloglucan oligomers. Involved in xyloglucan specific O-acetylation in roots and rosette leaves. This is Xyloglucan O-acetyltransferase 1 from Arabidopsis thaliana (Mouse-ear cress).